A 158-amino-acid chain; its full sequence is Phosphopantetheine adenylyltransferase (158 aa).

Substrate is bound at residue S9. ATP contacts are provided by residues 9–10 (SF) and H17. Substrate is bound by residues K41, V73, and K87. Residues 88 to 90 (GLR), E98, and 122 to 128 (YSFVSSS) contribute to the ATP site.

The protein belongs to the bacterial CoaD family. As to quaternary structure, homohexamer. Mg(2+) is required as a cofactor.

It is found in the cytoplasm. The enzyme catalyses (R)-4'-phosphopantetheine + ATP + H(+) = 3'-dephospho-CoA + diphosphate. It participates in cofactor biosynthesis; coenzyme A biosynthesis; CoA from (R)-pantothenate: step 4/5. Functionally, reversibly transfers an adenylyl group from ATP to 4'-phosphopantetheine, yielding dephospho-CoA (dPCoA) and pyrophosphate. This chain is Phosphopantetheine adenylyltransferase, found in Mycobacterium sp. (strain JLS).